Reading from the N-terminus, the 311-residue chain is Progestin and adipoQ receptor family member 3 (311 aa).

The tract at residues 1–20 (MHQKLLKSAHYIELGSYQYW) is required for interaction with SREBF2. The Cytoplasmic portion of the chain corresponds to 1–73 (MHQKLLKSAH…FILSNETVNI (73 aa)). The segment at 41–60 (KDNPYITDGYRAYLPSRLCI) is required for interaction with SCAP. The segment at 61-71 (KSLFILSNETV) is golgi targeting. Residues 74-96 (WSHLLGFFLFFTLGIYDMTSVLP) traverse the membrane as a helical segment. The Lumenal portion of the chain corresponds to 97–105 (SASASREDF). A helical transmembrane segment spans residues 106-128 (VICSICLFCFQVCMLCSVGYHLF). Topologically, residues 129 to 140 (SCHRSEKTCRRW) are cytoplasmic. The helical transmembrane segment at 141–163 (MALDYAGISIGILGCYVSGVFYA) threads the bilayer. Over 164–172 (FYCNNYWRQ) the chain is Lumenal. Residues 173–195 (VYLITVLAMILAVFFAQIHPNYL) form a helical membrane-spanning segment. The Cytoplasmic portion of the chain corresponds to 196-201 (TQQWQR). The chain crosses the membrane as a helical span at residues 202–224 (LRSIIFCSVSGYGVIPTLHWVWL). At 225–238 (NGGIGAPIVQDFAP) the chain is on the lumenal side. The chain crosses the membrane as a helical span at residues 239–256 (RVIVMYMIALLAFLFYIS). Residues 257-275 (KVPERYFPGQLNYLGSSHQ) are Cytoplasmic-facing. Residues 276 to 298 (IWHILAVVMLYWWHQSTVYVMQY) form a helical membrane-spanning segment. The golgi targeting stretch occupies residues 299-303 (RHSKP). Over 299–311 (RHSKPCPDYVSHL) the chain is Lumenal.

Belongs to the ADIPOR family. In terms of assembly, interacts with SCAP and SREBF2; the interactions are direct, increase in low cholesterol conditions and tether SCAP:SREBP complex to the Golgi apparatus. Interaction with SCAP is mutually exclusive with INSIG1. In hepatocytes, interacts with PPARA and HUWE1; the interactions promote PPARA poylubiquitination and HUWE1-mediated degradation. In macrophages, interacts with PPARG and STUB1; the interactions promote PPARG poylubiquitination and STUB1-mediated degradation. As to expression, widely expressed in a range of tissues.

The protein resides in the golgi apparatus membrane. Functionally, golgi-scaffold protein which modulates its interactors acitivies by anchoring them to the Golgi apparatus. Functions as a spatial regulator of RAF1 kinase by sequestrating it to the Golgi apparatus. Acts as a positive regulator of cholesterol biosynthesis by mediating the anchoring of the SCAP:SREBP complex in the Golgi apparatus, thereby promoting SCAP:SREBF2 complex formation, potentiating SREBF2 and SREBF1 processing and enhancing lipid synthesis. Also regulates PPARA and PPARG functions by mediating their interaction with E3 ubiquitin ligases, such as STUB1 or HUWE1, leading to their polyubiquitination and proteasome-mediated degradation. This Homo sapiens (Human) protein is Progestin and adipoQ receptor family member 3.